A 107-amino-acid polypeptide reads, in one-letter code: Pathogenesis-related protein PR-4 (107 aa).

The Barwin domain occupies 1 to 107; sequence QNINWDLRTA…VNYDFVDCGD (107 aa). Cystine bridges form between Cys14-Cys46, Cys35-Cys69, and Cys49-Cys105.

Preferentially expressed in the tissue surrounding the abscission zone of fruitlets.

It is found in the secreted. The protein localises to the cell wall. Its function is as follows. May be involved in protecting plant tissues from pathogen infection. This chain is Pathogenesis-related protein PR-4, found in Prunus persica (Peach).